A 337-amino-acid polypeptide reads, in one-letter code: Mitochondrial glutathione transporter SLC25A40 (337 aa).

Solcar repeat units lie at residues 14–132 (VTPL…LSTF), 140–224 (NETR…LRRW), and 234–328 (STFM…GKGF). 6 consecutive transmembrane segments (helical) span residues 20-40 (MMAS…LDVV), 104-124 (LWSG…IYFT), 146-166 (IVAG…LELI), 200-221 (WAPT…YENL), 240-260 (FTAG…FDVV), and 299-319 (GLFT…AIMI).

It belongs to the mitochondrial carrier (TC 2.A.29) family. Widely expressed at low level.

Its subcellular location is the mitochondrion inner membrane. The enzyme catalyses glutathione(in) = glutathione(out). Its function is as follows. Probable mitochondrial transporter required for glutathione import into mitochondria. Glutathione, which plays key roles in oxidative metabolism, is produced exclusively in the cytosol and is imported in many organelles. Mitochondrial glutathione is required for the activity and stability of proteins containing iron-sulfur clusters, as well as erythropoiesis. The chain is Mitochondrial glutathione transporter SLC25A40 from Rattus norvegicus (Rat).